The chain runs to 471 residues: 3-isopropylmalate dehydratase large subunit (471 aa).

3 residues coordinate [4Fe-4S] cluster: Cys349, Cys410, and Cys413.

The protein belongs to the aconitase/IPM isomerase family. LeuC type 1 subfamily. Heterodimer of LeuC and LeuD. [4Fe-4S] cluster is required as a cofactor.

The catalysed reaction is (2R,3S)-3-isopropylmalate = (2S)-2-isopropylmalate. Its pathway is amino-acid biosynthesis; L-leucine biosynthesis; L-leucine from 3-methyl-2-oxobutanoate: step 2/4. Catalyzes the isomerization between 2-isopropylmalate and 3-isopropylmalate, via the formation of 2-isopropylmaleate. The protein is 3-isopropylmalate dehydratase large subunit of Chromobacterium violaceum (strain ATCC 12472 / DSM 30191 / JCM 1249 / CCUG 213 / NBRC 12614 / NCIMB 9131 / NCTC 9757 / MK).